Consider the following 517-residue polypeptide: Putative transporter C543.05c (517 aa).

Helical transmembrane passes span 68–88 (SFGV…FALL), 93–113 (LCIV…YDIM), 121–141 (FPFL…IAIA), 155–175 (CEIF…QVLC), 186–206 (FLSI…DTVG), 217–237 (ILLL…FQHI), 269–289 (IPVG…ILFY), 311–331 (GFHW…ILGI), 377–397 (SNFI…LLVL), 403–423 (CVLA…NGIT), and 449–471 (RVVW…ITQV).

Belongs to the anion exchanger (TC 2.A.31) family.

Its subcellular location is the vacuole membrane. This chain is Putative transporter C543.05c, found in Schizosaccharomyces pombe (strain 972 / ATCC 24843) (Fission yeast).